The chain runs to 86 residues: Kappa-theraphotoxin-Cg1a 4 (86 aa).

The signal sequence occupies residues Met1–Ala21. Residues Ala22–Arg50 constitute a propeptide that is removed on maturation. Intrachain disulfides connect Cys52/Cys66, Cys59/Cys71, and Cys65/Cys78. Phe84 carries the phenylalanine amide modification.

The protein belongs to the neurotoxin 10 (Hwtx-1) family. 28 (Jztx-11) subfamily. As to expression, expressed by the venom gland.

The protein resides in the secreted. In terms of biological role, this toxin acts as a voltage-dependent gating-modifier. It inhibits the sodium conductance (IC(50)=124 nM) and slows the fast inactivation (EC(50)=1180 nM) of Nav1.5/SCN5A. It significantly shifts the activation to more depolarized voltages and decreases the deactivation of Nav1.5 currents upon extreme depolarization, but only slightly affects voltage-dependence of steady-state inactivation. In addition, this toxin causes an approximately five-fold decrease in the rate of recovery from inactivation and an approximately 1.9-fold reduction in the closed-state inactivation rate. This toxin integrates the functions of site 3 toxins (alpha-scorpion toxins) with site 4 toxins (beta-scorpion and spider toxins) by targeting multiple sites on Nav1.5. Also shows inhibition of voltage-gated potassium channels (5 uM completely inhibits Kv2.1/KCNB1, whereas 5 uM moderately inhibits Kv4.2/KCND2 Kv4.1/KCND1 channels). This chain is Kappa-theraphotoxin-Cg1a 4, found in Chilobrachys guangxiensis (Chinese earth tiger tarantula).